We begin with the raw amino-acid sequence, 94 residues long: Immune protein Tsi6 (94 aa).

Immunity protein that plays a role in preventing early activation of toxin Tse6. This is Immune protein Tsi6 from Pseudomonas aeruginosa (strain ATCC 15692 / DSM 22644 / CIP 104116 / JCM 14847 / LMG 12228 / 1C / PRS 101 / PAO1).